A 115-amino-acid chain; its full sequence is Na(+)/H(+) antiporter subunit C1 (115 aa).

Helical transmembrane passes span 1-21 (MEIL…YLIL), 28-48 (IIIG…TMGG), and 72-92 (LILT…VLAF).

Belongs to the CPA3 antiporters (TC 2.A.63) subunit C family. In terms of assembly, may form a heterooligomeric complex that consists of seven subunits: mnhA1, mnhB1, mnhC1, mnhD1, mnhE1, mnhF1 and mnhG1.

The protein resides in the cell membrane. Its function is as follows. Mnh complex is a Na(+)/H(+) antiporter involved in Na(+) excretion. The chain is Na(+)/H(+) antiporter subunit C1 (mnhC1) from Staphylococcus saprophyticus subsp. saprophyticus (strain ATCC 15305 / DSM 20229 / NCIMB 8711 / NCTC 7292 / S-41).